A 158-amino-acid chain; its full sequence is Tryptophan-rich protein TspO (158 aa).

The next 5 membrane-spanning stretches (helical) occupy residues 5–25, 48–68, 79–99, 105–125, and 134–154; these read ILTL…GSTF, LFPP…AKVL, VGVV…ASFF, LAGL…MLAF, and LLLV…FTIL.

It belongs to the TspO/BZRP family.

The protein localises to the membrane. The protein resides in the cell membrane. In terms of biological role, binds tetrapyrroles and promotes the photooxidative degradation of protoporphyrin IX. Can bind the benzodiazepine receptor agonist PK-11195 (in vitro); this interferes with photooxidative tetrapyrrole degradation. May play a role in the transmembrane transport of tetrapyrroles and similar compounds. This Chlorobaculum tepidum (strain ATCC 49652 / DSM 12025 / NBRC 103806 / TLS) (Chlorobium tepidum) protein is Tryptophan-rich protein TspO.